A 102-amino-acid polypeptide reads, in one-letter code: ATP-dependent Clp protease adapter protein ClpS (102 aa).

The protein belongs to the ClpS family. Binds to the N-terminal domain of the chaperone ClpA.

In terms of biological role, involved in the modulation of the specificity of the ClpAP-mediated ATP-dependent protein degradation. This Herminiimonas arsenicoxydans protein is ATP-dependent Clp protease adapter protein ClpS.